We begin with the raw amino-acid sequence, 254 residues long: MVPWLGPDDPFPSIERALGPATGAPGLLAASADLLPSRLIDAYLRGIFPWYSDGQPVLWWSPDPRMILVPAEFKVSPSLRKTLKRVLRAPEWEVRVDHDFAGVMRACAQAPRRGQRGTWITAEIIDAYTSLYRSGNAHSIETWHDGRRVGGLYGVSFGRMFFGESMYADVTDASKIALAALIAHLREQRLEMIDCQQNTSHLASLGGREIARKAFVAHVRSAVAEPPIPWQFDKRVLAALTSPAETAAPTGTER.

It belongs to the L/F-transferase family.

Its subcellular location is the cytoplasm. The catalysed reaction is N-terminal L-lysyl-[protein] + L-leucyl-tRNA(Leu) = N-terminal L-leucyl-L-lysyl-[protein] + tRNA(Leu) + H(+). It carries out the reaction N-terminal L-arginyl-[protein] + L-leucyl-tRNA(Leu) = N-terminal L-leucyl-L-arginyl-[protein] + tRNA(Leu) + H(+). It catalyses the reaction L-phenylalanyl-tRNA(Phe) + an N-terminal L-alpha-aminoacyl-[protein] = an N-terminal L-phenylalanyl-L-alpha-aminoacyl-[protein] + tRNA(Phe). Its function is as follows. Functions in the N-end rule pathway of protein degradation where it conjugates Leu, Phe and, less efficiently, Met from aminoacyl-tRNAs to the N-termini of proteins containing an N-terminal arginine or lysine. This Burkholderia cenocepacia (strain HI2424) protein is Leucyl/phenylalanyl-tRNA--protein transferase.